The sequence spans 326 residues: Cyclin-dependent kinase 6 (326 aa).

Position 1 is an N-acetylmethionine (methionine 1). 2 positions are modified to phosphotyrosine: tyrosine 13 and tyrosine 24. Residues 13–300 (YECVAEIGEG…AYSALSHPYF (288 aa)) enclose the Protein kinase domain. ATP contacts are provided by residues 19–27 (IGEGAYGKV) and lysine 43. Threonine 49 and threonine 70 each carry phosphothreonine. The Proton acceptor role is filled by aspartate 145. Threonine 177 carries the phosphothreonine modification. Lysine 264 carries the post-translational modification N6-acetyllysine. Threonine 325 bears the Phosphothreonine mark.

It belongs to the protein kinase superfamily. CMGC Ser/Thr protein kinase family. CDC2/CDKX subfamily. Interaction with D-type G1 cyclins. Cyclin binding promotes enzyme activation by phosphorylation at Thr-177. Binds to RUNX1, CDKN2D, FBXO7 and CDKN2C/p18-INK4c. Forms a cytoplasmic complex with Hsp90/HSP90AB1 and CDC37. FBXO7-binding promotes D-type cyclin binding. Interacts with Kaposi's sarcoma herpesvirus (KSHV) V-cyclin and herpesvirus saimiri (V-cyclin/ECLF2); the CDK6/V-cyclin complex phosphorylates NPM1 and thus lead to viral reactivation by reducing viral LANA levels. Thr-177 phosphorylation and Tyr-24 dephosphorylation promotes kinase activity. As to expression, expressed ubiquitously. Accumulates in squamous cell carcinomas, proliferating hematopoietic progenitor cells, beta-cells of pancreatic islets of Langerhans, and neuroblastomas. Reduced levels in differentiating cells.

The protein resides in the cytoplasm. The protein localises to the nucleus. Its subcellular location is the cell projection. It is found in the ruffle. It localises to the cytoskeleton. The protein resides in the microtubule organizing center. The protein localises to the centrosome. The catalysed reaction is L-seryl-[protein] + ATP = O-phospho-L-seryl-[protein] + ADP + H(+). The enzyme catalyses L-threonyl-[protein] + ATP = O-phospho-L-threonyl-[protein] + ADP + H(+). Inhibited by INK4 proteins (CDKN2C/p18-INK4c), aminopurvalanol, PD0332991, 4-(Pyrazol-4-yl)-pyrimidines and fisetin, a flavonol inhibitor. Activated by Thr-177 phosphorylation and Tyr-24 dephosphorylation. Stimulated by cyclin from herpesvirus saimiri (V-cyclin/ECLF2). Rapidly down-regulated prior to cell differentiation (e.g. erythroid and osteoblast). Functionally, serine/threonine-protein kinase involved in the control of the cell cycle and differentiation; promotes G1/S transition. Phosphorylates pRB/RB1 and NPM1. Interacts with D-type G1 cyclins during interphase at G1 to form a pRB/RB1 kinase and controls the entrance into the cell cycle. Involved in initiation and maintenance of cell cycle exit during cell differentiation; prevents cell proliferation and negatively regulates cell differentiation, but is required for the proliferation of specific cell types (e.g. erythroid and hematopoietic cells). Essential for cell proliferation within the dentate gyrus of the hippocampus and the subventricular zone of the lateral ventricles. Required during thymocyte development. Promotes the production of newborn neurons, probably by modulating G1 length. Promotes, at least in astrocytes, changes in patterns of gene expression, changes in the actin cytoskeleton including loss of stress fibers, and enhanced motility during cell differentiation. Prevents myeloid differentiation by interfering with RUNX1 and reducing its transcription transactivation activity, but promotes proliferation of normal myeloid progenitors. Delays senescence. Promotes the proliferation of beta-cells in pancreatic islets of Langerhans. May play a role in the centrosome organization during the cell cycle phases. The protein is Cyclin-dependent kinase 6 (CDK6) of Homo sapiens (Human).